The following is a 346-amino-acid chain: Heterogeneous nuclear ribonucleoprotein A1 (346 aa).

2 consecutive RRM domains span residues 23 to 123 (RKIF…GVRE) and 114 to 191 (KRLY…KGLS). 2 stretches are compositionally biased toward basic and acidic residues: residues 92-107 (TVDP…KNRS) and 189-215 (GLSK…RDGQ). 2 disordered regions span residues 92-111 (TVDP…ESNV) and 189-346 (GLSK…NRNY). Gly residues-rich tracts occupy residues 216–296 (RGGY…GWGG) and 303–331 (GGWG…GGQS). Low complexity predominate over residues 332–346 (GAQQWAHAQGGNRNY).

The protein localises to the nucleus. The protein resides in the chromosome. It is found in the telomere. Functionally, this protein is a component of ribonucleosomes. Overexpression gradually increases telomere length, leading to increase lifespan. The polypeptide is Heterogeneous nuclear ribonucleoprotein A1 (Caenorhabditis elegans).